A 318-amino-acid polypeptide reads, in one-letter code: Dehydrogenase/reductase SDR family member 7C-B (318 aa).

The signal sequence occupies residues 1–32; that stretch reads MGMSDIMWLDVSWAWLVLTAVLLAAAVFYLYT. 49-73 is a binding site for NAD(+); it reads LITDSLSTVGNECAKLFHAGGARLI. Ser186 is a binding site for substrate. Tyr199 (proton acceptor) is an active-site residue.

Belongs to the short-chain dehydrogenases/reductases (SDR) family.

It is found in the secreted. Putative oxidoreductase. In Danio rerio (Zebrafish), this protein is Dehydrogenase/reductase SDR family member 7C-B (dhrs7cb).